We begin with the raw amino-acid sequence, 199 residues long: 7-methyl-GTP pyrophosphatase (199 aa).

Residue Asp-72 is the Proton acceptor of the active site.

This sequence belongs to the Maf family. YceF subfamily. Requires a divalent metal cation as cofactor.

The protein resides in the cytoplasm. The enzyme catalyses N(7)-methyl-GTP + H2O = N(7)-methyl-GMP + diphosphate + H(+). Nucleoside triphosphate pyrophosphatase that hydrolyzes 7-methyl-GTP (m(7)GTP). May have a dual role in cell division arrest and in preventing the incorporation of modified nucleotides into cellular nucleic acids. The sequence is that of 7-methyl-GTP pyrophosphatase from Alkalilimnicola ehrlichii (strain ATCC BAA-1101 / DSM 17681 / MLHE-1).